Here is a 202-residue protein sequence, read N- to C-terminus: Josephin-1 (202 aa).

A Phosphoserine modification is found at Ser15. Positions 23 to 202 (PPQIYHEKQR…EAHQSWRTDV (180 aa)) constitute a Josephin domain. Cys36 serves as the catalytic Nucleophile. His139 serves as the catalytic Proton acceptor.

In terms of assembly, interacts with beta-actin/ACTB. Monoubiquitinated. Ubiquitination activates deubiquitination activity in vitro.

The protein localises to the cell membrane. The protein resides in the cytoplasm. It carries out the reaction Thiol-dependent hydrolysis of ester, thioester, amide, peptide and isopeptide bonds formed by the C-terminal Gly of ubiquitin (a 76-residue protein attached to proteins as an intracellular targeting signal).. Deubiquitinates monoubiquitinated probes (in vitro). When ubiquitinated, cleaves 'Lys-63'-linked and 'Lys-48'-linked poly-ubiquitin chains (in vitro), hence may act as a deubiquitinating enzyme. May increase macropinocytosis and suppress clathrin- and caveolae-mediated endocytosis. May enhance membrane dynamics and cell motility independently of its catalytic activity. The chain is Josephin-1 (JOSD1) from Pongo abelii (Sumatran orangutan).